Reading from the N-terminus, the 86-residue chain is Triple QxxK/R motif-containing protein (86 aa).

Residues 51 to 71 form a helical membrane-spanning segment; it reads VGLMLAAILALLLAFYAFFYL.

This sequence belongs to the TRIQK family. Expressed in heart, brain, spleen, lung, liver, skeletal muscle, kidney and testis.

The protein resides in the endoplasmic reticulum membrane. In terms of biological role, may play a role in cell growth and maintenance of cell morphology. The chain is Triple QxxK/R motif-containing protein (Triqk) from Mus musculus (Mouse).